Consider the following 96-residue polypeptide: ATP synthase subunit c (96 aa).

2 consecutive transmembrane segments (helical) span residues 9 to 29 (FIACVTAAGFGIAIAAFGCGI) and 58 to 78 (IGLAMIESLCIYALVVALILI).

It belongs to the ATPase C chain family. F-type ATPases have 2 components, F(1) - the catalytic core - and F(0) - the membrane proton channel. F(1) has five subunits: alpha(3), beta(3), gamma(1), delta(1), epsilon(1). F(0) has three main subunits: a(1), b(2) and c(10-14). The alpha and beta chains form an alternating ring which encloses part of the gamma chain. F(1) is attached to F(0) by a central stalk formed by the gamma and epsilon chains, while a peripheral stalk is formed by the delta and b chains.

Its subcellular location is the cell inner membrane. Functionally, f(1)F(0) ATP synthase produces ATP from ADP in the presence of a proton or sodium gradient. F-type ATPases consist of two structural domains, F(1) containing the extramembraneous catalytic core and F(0) containing the membrane proton channel, linked together by a central stalk and a peripheral stalk. During catalysis, ATP synthesis in the catalytic domain of F(1) is coupled via a rotary mechanism of the central stalk subunits to proton translocation. Its function is as follows. Key component of the F(0) channel; it plays a direct role in translocation across the membrane. A homomeric c-ring of between 10-14 subunits forms the central stalk rotor element with the F(1) delta and epsilon subunits. In Desulfosudis oleivorans (strain DSM 6200 / JCM 39069 / Hxd3) (Desulfococcus oleovorans), this protein is ATP synthase subunit c.